Consider the following 622-residue polypeptide: Galactolipid galactosyltransferase SFR2, chloroplastic (622 aa).

The Stromal portion of the chain corresponds to 1–3; that stretch reads MEL. The helical; Signal-anchor transmembrane segment at 4-24 threads the bilayer; that stretch reads FALLIKVAGLLATVTVGANVV. Topologically, residues 25 to 622 are cytoplasmic; the sequence is SYSRFRRQNL…LHPALASPFD (598 aa). Residues His222, 266–267, Tyr377, Glu429, Trp467, 474–475, and Phe483 each bind a beta-D-glucoside; these read NE and EW. Glu267 functions as the Proton donor in the catalytic mechanism. The active-site Nucleophile is Glu429.

The protein belongs to the glycosyl hydrolase 1 family. In terms of tissue distribution, expressed in hypocotyls, cotyledons, stems, leaves, pedicels, sepals, anthers and pistils. Limited expression in roots. Not detected in petals or filaments.

The protein localises to the plastid. The protein resides in the chloroplast. It is found in the chloroplast outer membrane. It catalyses the reaction 2 a 1,2-diacyl-3-O-(beta-D-galactosyl)-sn-glycerol = a 1,2-diacyl-3-O-[beta-D-galactosyl-(1-&gt;6)-beta-D-galactosyl]-sn-glycerol + a 1,2-diacyl-sn-glycerol. Its activity is regulated as follows. Induced by MgCl(2). Functionally, glycosyl hydrolase family protein acting primarily as a highly specific galactosyltransferase. Synthesizes digalactosyldiacylglycerol from monogalactosyldiacylglycerol in the absence of UDP-galactose in vitro. Hydrolyzes o- and p-nitrophenyl beta-D-glucoside in vitro. Plays a role in freezing tolerance. May play a role in chloroplast protection. The sequence is that of Galactolipid galactosyltransferase SFR2, chloroplastic from Arabidopsis thaliana (Mouse-ear cress).